The chain runs to 516 residues: 2-isopropylmalate synthase (516 aa).

Residues 5–268 enclose the Pyruvate carboxyltransferase domain; that stretch reads LIIFDTTLRD…DLGIDTTQIV (264 aa). Mn(2+) contacts are provided by aspartate 14, histidine 202, histidine 204, and asparagine 239. The tract at residues 395-516 is regulatory domain; the sequence is KFVSLSQHSE…DKLNPQRADI (122 aa).

The protein belongs to the alpha-IPM synthase/homocitrate synthase family. LeuA type 1 subfamily. In terms of assembly, homodimer. Requires Mn(2+) as cofactor.

The protein resides in the cytoplasm. The enzyme catalyses 3-methyl-2-oxobutanoate + acetyl-CoA + H2O = (2S)-2-isopropylmalate + CoA + H(+). The protein operates within amino-acid biosynthesis; L-leucine biosynthesis; L-leucine from 3-methyl-2-oxobutanoate: step 1/4. Its function is as follows. Catalyzes the condensation of the acetyl group of acetyl-CoA with 3-methyl-2-oxobutanoate (2-ketoisovalerate) to form 3-carboxy-3-hydroxy-4-methylpentanoate (2-isopropylmalate). In Paraburkholderia phymatum (strain DSM 17167 / CIP 108236 / LMG 21445 / STM815) (Burkholderia phymatum), this protein is 2-isopropylmalate synthase.